A 362-amino-acid chain; its full sequence is Porin Omp2b (362 aa).

A signal peptide spans 1–22 (MNIKSLLLGSAAALVAASGAQA).

This sequence belongs to the alphaproteobacteria porin family. In terms of assembly, homotrimer.

It localises to the cell outer membrane. Forms passive diffusion pores that allow small molecular weight hydrophilic materials across the outer membrane. The protein is Porin Omp2b (omp2b) of Brucella abortus (strain S19).